Consider the following 1265-residue polypeptide: Protein diaphanous homolog 1 (1265 aa).

Met1 is modified (N-acetylmethionine). A compositionally biased stretch (gly residues) spans 1 to 12; it reads MEPSGGGLGPGR. Disordered regions lie at residues 1 to 42 and 54 to 83; these read MEPS…FTLK and SMRIKKEKEKPNSAHRNSSASYGDDPTAQS. Ser22 carries the phosphoserine modification. The span at 54-65 shows a compositional bias: basic and acidic residues; sequence SMRIKKEKEKPN. Residues 67 to 83 show a composition bias toward polar residues; the sequence is AHRNSSASYGDDPTAQS. Residues 84-449 form the GBD/FH3 domain; sequence LQDISDDQVL…QIVLHKNGTD (366 aa). Residues 474–568 are a coiled coil; it reads VEKSEAKATE…KKEMASLSAV (95 aa). The disordered stretch occupies residues 573 to 742; sequence SVSSSAAVPQ…PPPPGMGVPP (170 aa). Pro residues-rich tracts occupy residues 594–628 and 645–742; these read IPPPPPPPLPGGAVPPPPPPPLPAGTGIPPPPPLP and IPPP…GVPP. The FH1 domain maps to 625 to 757; the sequence is PPLPGGACIS…FGIPAAPVLP (133 aa). A Phosphothreonine modification is found at Thr761. Residues 762-1164 enclose the FH2 domain; the sequence is PKKVYKPEVQ…MRRAKLAKEK (403 aa). 2 positions are modified to N6-acetyllysine: Lys1050 and Lys1096. Tyr1114 bears the Phosphotyrosine mark. The stretch at 1141–1185 forms a coiled coil; the sequence is AVKENQKRRETEEKMRRAKLAKEKAEKERLEKQQKREQLIDMNAE. The DAD domain maps to 1187-1215; that stretch reads DETGVMDSLLEALQSGAAFRRKRGPRQVN. A Phosphoserine modification is found at Ser1247.

The protein belongs to the formin homology family. Diaphanous subfamily. Homodimer. Interacts with the GTP-bound form of RHOA. Interacts with RHOC, PFY1, MAPRE1, BAIAP2 and APC. Interacts with SCAI. Interacts with DCAF7, via FH2 domain. Interacts with NCDN. Interacts with OSBPL10, OSBPL2, VIM, TUBB and DYN1. Phosphorylation at Thr-761 is stimulated by cAMP and regulates stability, complex formation and mitochondrial movement. Expressed in testis. Present in Sertoli cells (at protein level).

It localises to the cell membrane. The protein resides in the cell projection. Its subcellular location is the ruffle membrane. It is found in the cytoplasm. The protein localises to the cytoskeleton. It localises to the microtubule organizing center. The protein resides in the centrosome. Its subcellular location is the spindle. It is found in the nucleus. Actin nucleation and elongation factor required for the assembly of F-actin structures, such as actin cables and stress fibers. Binds to the barbed end of the actin filament and slows down actin polymerization and depolymerization. Required for cytokinesis, and transcriptional activation of the serum response factor. DFR proteins couple Rho and Src tyrosine kinase during signaling and the regulation of actin dynamics. Functions as a scaffold protein for MAPRE1 and APC to stabilize microtubules and promote cell migration. Has neurite outgrowth promoting activity. Acts in a Rho-dependent manner to recruit PFY1 to the membrane. The MEMO1-RHOA-DIAPH1 signaling pathway plays an important role in ERBB2-dependent stabilization of microtubules at the cell cortex. It controls the localization of APC and CLASP2 to the cell membrane, via the regulation of GSK3B activity. In turn, membrane-bound APC allows the localization of the MACF1 to the cell membrane, which is required for microtubule capture and stabilization. Plays a role in the regulation of cell morphology and cytoskeletal organization. Required in the control of cell shape. Also acts as an actin nucleation and elongation factor in the nucleus by promoting nuclear actin polymerization inside the nucleus to drive serum-dependent SRF-MRTFA activity. In Rattus norvegicus (Rat), this protein is Protein diaphanous homolog 1.